Consider the following 320-residue polypeptide: L-lactate dehydrogenase A (320 aa).

Positions 88, 120, and 151 each coordinate substrate. Asparagine 120 contacts NAD(+). Catalysis depends on histidine 175, which acts as the Proton acceptor.

This sequence belongs to the LDH/MDH superfamily. LDH family. In terms of assembly, homotetramer.

The protein resides in the cytoplasm. It catalyses the reaction (S)-lactate + NAD(+) = pyruvate + NADH + H(+). It participates in fermentation; pyruvate fermentation to lactate; (S)-lactate from pyruvate: step 1/1. In terms of biological role, converts pyruvate to lactate. This chain is L-lactate dehydrogenase A (LDHA), found in Rhizopus oryzae (Mucormycosis agent).